The chain runs to 57 residues: Metallothionein-2 (57 aa).

A beta region spans residues 1 to 28; it reads PDPCCNDKCDCKEGECKTGCKCTSCRCP. A divalent metal cation contacts are provided by C4, C5, C9, C11, C16, C20, C22, C25, C27, C30, C33, C37, C39, C45, C49, C53, C55, and C56. The alpha stretch occupies residues 29 to 57; the sequence is PCEQCSSGCKCANKEDCRKTCSKPCSCCP.

It belongs to the metallothionein superfamily. Type 3 family.

Its function is as follows. Metallothioneins have a high content of cysteine residues that bind various heavy metals. Class I MTS in marine crustacea are involved in the sequestration of elevated levels of heavy-metal ions. This Scylla serrata (Mud crab) protein is Metallothionein-2.